Here is a 399-residue protein sequence, read N- to C-terminus: Elongation factor Tu (399 aa).

In terms of domain architecture, tr-type G spans 10–204 (KPHVNIGTIG…AVDSSIPEPE (195 aa)). The interval 19 to 26 (GHVDHGKT) is G1. Position 19-26 (19-26 (GHVDHGKT)) interacts with GTP. T26 is a binding site for Mg(2+). The interval 60–64 (GITIN) is G2. The G3 stretch occupies residues 81-84 (DCPG). Residues 81–85 (DCPGH) and 136–139 (NKCD) each bind GTP. A G4 region spans residues 136–139 (NKCD). The interval 174-176 (SGL) is G5.

The protein belongs to the TRAFAC class translation factor GTPase superfamily. Classic translation factor GTPase family. EF-Tu/EF-1A subfamily. Monomer.

The protein resides in the cytoplasm. The enzyme catalyses GTP + H2O = GDP + phosphate + H(+). Its function is as follows. GTP hydrolase that promotes the GTP-dependent binding of aminoacyl-tRNA to the A-site of ribosomes during protein biosynthesis. In Synechococcus sp. (strain CC9605), this protein is Elongation factor Tu.